The sequence spans 318 residues: Aspartate carbamoyltransferase catalytic subunit (318 aa).

Carbamoyl phosphate contacts are provided by R64 and T65. K92 is an L-aspartate binding site. Carbamoyl phosphate contacts are provided by R114, H142, and Q145. L-aspartate contacts are provided by R176 and R230. Residues G271 and P272 each coordinate carbamoyl phosphate.

This sequence belongs to the aspartate/ornithine carbamoyltransferase superfamily. ATCase family. In terms of assembly, heterododecamer (2C3:3R2) of six catalytic PyrB chains organized as two trimers (C3), and six regulatory PyrI chains organized as three dimers (R2).

The catalysed reaction is carbamoyl phosphate + L-aspartate = N-carbamoyl-L-aspartate + phosphate + H(+). It participates in pyrimidine metabolism; UMP biosynthesis via de novo pathway; (S)-dihydroorotate from bicarbonate: step 2/3. Functionally, catalyzes the condensation of carbamoyl phosphate and aspartate to form carbamoyl aspartate and inorganic phosphate, the committed step in the de novo pyrimidine nucleotide biosynthesis pathway. The polypeptide is Aspartate carbamoyltransferase catalytic subunit (Desulfovibrio desulfuricans (strain ATCC 27774 / DSM 6949 / MB)).